The chain runs to 843 residues: Protein kintoun (843 aa).

Disordered stretches follow at residues 212-242, 371-417, 545-672, and 761-843; these read PTAE…VHPM, FSRE…PVHS, YTVK…GASQ, and KKNQ…DDVM. S376 is subject to Phosphoserine. The span at 387-397 shows a compositional bias: acidic residues; sequence PVEEEEADADL. The segment covering 564-573 has biased composition (basic and acidic residues); sequence VKFDHNKESL. The span at 584-593 shows a compositional bias: acidic residues; that stretch reads TEEDEVEEQH. The span at 605-619 shows a compositional bias: basic residues; that stretch reads QNKKPSKKQRKRNKK. Positions 658–671 are enriched in polar residues; sequence YSECNDSSVGSGAS. Residues 761-775 are compositionally biased toward basic residues; the sequence is KKNQKRRDLKLRAQQ. Phosphoserine is present on S779.

Belongs to the PIH1 family. Kintoun subfamily. Interacts with Pp1alpha-96A, Pp1-87B, Pp1-13C and flw.

It is found in the cytoplasm. Its function is as follows. Required for cytoplasmic pre-assembly of axonemal dyneins, thereby playing a central role in motility in cilia and flagella. Involved in pre-assembly of dynein arm complexes in the cytoplasm before intraflagellar transport loads them for the ciliary compartment. In Drosophila ananassae (Fruit fly), this protein is Protein kintoun.